Reading from the N-terminus, the 271-residue chain is NADPH-dependent 7-cyano-7-deazaguanine reductase (271 aa).

A substrate-binding site is contributed by 79-81; sequence IES. NADPH is bound at residue 81-82; it reads SK. Catalysis depends on Cys178, which acts as the Thioimide intermediate. The Proton donor role is filled by Asp185. 217-218 contacts substrate; the sequence is HE. 246-247 contributes to the NADPH binding site; the sequence is RG.

Belongs to the GTP cyclohydrolase I family. QueF type 2 subfamily. Homodimer.

It is found in the cytoplasm. It catalyses the reaction 7-aminomethyl-7-carbaguanine + 2 NADP(+) = 7-cyano-7-deazaguanine + 2 NADPH + 3 H(+). The protein operates within tRNA modification; tRNA-queuosine biosynthesis. Catalyzes the NADPH-dependent reduction of 7-cyano-7-deazaguanine (preQ0) to 7-aminomethyl-7-deazaguanine (preQ1). The protein is NADPH-dependent 7-cyano-7-deazaguanine reductase of Acinetobacter baylyi (strain ATCC 33305 / BD413 / ADP1).